An 82-amino-acid polypeptide reads, in one-letter code: MSASKILVGCWLGLAVLSVSTVLLGNAGATLALAAGVLLAAFGKAWLITDGFMELRHAPPAWRLLLLGWPLLMAIGVLLTLL.

The next 3 helical transmembrane spans lie at 1–21, 22–42, and 62–82; these read MSAS…SVST, VLLG…LAAF, and WRLL…LTLL.

Its subcellular location is the cell membrane. This is an uncharacterized protein from Stutzerimonas stutzeri (Pseudomonas stutzeri).